We begin with the raw amino-acid sequence, 1581 residues long: Maestro heat-like repeat-containing protein family member 2B (1581 aa).

HEAT repeat units follow at residues phenylalanine 123–lysine 160, alanine 305–proline 342, methionine 401–glycine 441, aspartate 464–serine 501, alanine 526–glutamate 543, methionine 544–lysine 580, glutamate 658–threonine 695, threonine 773–alanine 815, cysteine 960–proline 997, proline 1017–valine 1055, lysine 1112–histidine 1150, histidine 1153–arginine 1191, glycine 1254–leucine 1291, glycine 1295–histidine 1332, cysteine 1359–phenylalanine 1379, and tyrosine 1380–arginine 1416.

Found in a complex at least composed of MROH2B isoform 2, PRKACA isoform 2 and TCP11. Interacts with PRKACA isoform 2. Interacts with TCP11. Post-translationally, constitutively phosphorylated on serine and threonine residues in acrosomal region of the sperm head, midpiece and flagellar regions of noncapacitated spermatozoa. Phosphorylation on tyrosine residues increases upon sperm capacitation within the acrosomal and tail regions in a protein kinase A (PKA)-dependent signaling pathway. In terms of tissue distribution, expressed strongly in round spermatids and fully mature spermatozoa. Expressed weakly in pachytene spermatocytes (at protein level). Isoform 2 is specifically expressed in the testis. Isoform 2 is expressed in pachytene spermatocytes and round spermatids. Isoform 3 is weakly expressed in testis.

The protein resides in the cytoplasm. The protein localises to the cytoplasmic vesicle. It is found in the secretory vesicle. It localises to the acrosome. Its subcellular location is the cell projection. The protein resides in the cilium. The protein localises to the flagellum. In terms of biological role, may play a role in the process of sperm capacitation. This Mus musculus (Mouse) protein is Maestro heat-like repeat-containing protein family member 2B.